The sequence spans 480 residues: Chromosomal replication initiator protein DnaA (480 aa).

The segment at methionine 1 to arginine 71 is domain I, interacts with DnaA modulators. Residues arginine 71–serine 142 form a domain II region. Residues arginine 143–alanine 359 are domain III, AAA+ region. ATP-binding residues include glycine 187, glycine 189, lysine 190, and threonine 191. The segment at arginine 360 to glycine 480 is domain IV, binds dsDNA.

It belongs to the DnaA family. As to quaternary structure, oligomerizes as a right-handed, spiral filament on DNA at oriC.

Its subcellular location is the cytoplasm. Plays an essential role in the initiation and regulation of chromosomal replication. ATP-DnaA binds to the origin of replication (oriC) to initiate formation of the DNA replication initiation complex once per cell cycle. Binds the DnaA box (a 9 base pair repeat at the origin) and separates the double-stranded (ds)DNA. Forms a right-handed helical filament on oriC DNA; dsDNA binds to the exterior of the filament while single-stranded (ss)DNA is stabiized in the filament's interior. The ATP-DnaA-oriC complex binds and stabilizes one strand of the AT-rich DNA unwinding element (DUE), permitting loading of DNA polymerase. After initiation quickly degrades to an ADP-DnaA complex that is not apt for DNA replication. Binds acidic phospholipids. This chain is Chromosomal replication initiator protein DnaA, found in Bordetella bronchiseptica (strain ATCC BAA-588 / NCTC 13252 / RB50) (Alcaligenes bronchisepticus).